A 578-amino-acid chain; its full sequence is Putative ankyrin repeat protein FPV022 (578 aa).

11 ANK repeats span residues 4–34 (RRKS…DLNK), 38–67 (KNRT…KMSA), 68–97 (CKVP…SVDV), 100–129 (KGET…SGPY), 160–189 (YGHT…ITDN), 222–251 (EGTT…DPKV), 255–287 (HSVS…MVNM), 320–349 (YLSE…NINK), 353–382 (YGNI…DVNA), 386–415 (DGNT…DINS), and 419–449 (NGRT…KKNK).

The sequence is that of Putative ankyrin repeat protein FPV022 from Fowlpox virus (strain NVSL) (FPV).